Reading from the N-terminus, the 95-residue chain is PqqA binding protein (95 aa).

The protein belongs to the PqqD family. Monomer. Interacts with PqqE.

It participates in cofactor biosynthesis; pyrroloquinoline quinone biosynthesis. In terms of biological role, functions as a PqqA binding protein and presents PqqA to PqqE, in the pyrroloquinoline quinone (PQQ) biosynthetic pathway. The polypeptide is PqqA binding protein (Rahnella aquatilis).